The following is a 603-amino-acid chain: UvrABC system protein C (603 aa).

One can recognise a GIY-YIG domain in the interval 15–92 (DQPGCYLMKD…IKKHDPRFNI (78 aa)). The UVR domain occupies 197–232 (KTVKNDLMKKMQVAAENMEFEKAGEFRDQINAIETT).

Belongs to the UvrC family. Interacts with UvrB in an incision complex.

The protein localises to the cytoplasm. In terms of biological role, the UvrABC repair system catalyzes the recognition and processing of DNA lesions. UvrC both incises the 5' and 3' sides of the lesion. The N-terminal half is responsible for the 3' incision and the C-terminal half is responsible for the 5' incision. The polypeptide is UvrABC system protein C (Listeria welshimeri serovar 6b (strain ATCC 35897 / DSM 20650 / CCUG 15529 / CIP 8149 / NCTC 11857 / SLCC 5334 / V8)).